We begin with the raw amino-acid sequence, 394 residues long: Elongation factor Tu 2 (394 aa).

The tr-type G domain maps to 10–204 (KPHVNVGTIG…FLDSYIPEPE (195 aa)). The interval 19–26 (GHVDHGKT) is G1. 19–26 (GHVDHGKT) serves as a coordination point for GTP. T26 is a binding site for Mg(2+). The G2 stretch occupies residues 60-64 (GITIN). Positions 81 to 84 (DCPG) are G3. GTP is bound by residues 81-85 (DCPGH) and 136-139 (NKCD). The G4 stretch occupies residues 136 to 139 (NKCD). Residues 174 to 176 (SAL) are G5.

It belongs to the TRAFAC class translation factor GTPase superfamily. Classic translation factor GTPase family. EF-Tu/EF-1A subfamily. As to quaternary structure, monomer.

The protein resides in the cytoplasm. The enzyme catalyses GTP + H2O = GDP + phosphate + H(+). Its function is as follows. GTP hydrolase that promotes the GTP-dependent binding of aminoacyl-tRNA to the A-site of ribosomes during protein biosynthesis. In Escherichia coli O139:H28 (strain E24377A / ETEC), this protein is Elongation factor Tu 2.